The chain runs to 589 residues: Aspartate--tRNA ligase (589 aa).

An L-aspartate-binding site is contributed by Glu174. Positions 198-201 (QLFK) are aspartate. Arg220 is an L-aspartate binding site. Residues 220-222 (RDE) and Gln229 contribute to the ATP site. An L-aspartate-binding site is contributed by His448. Glu483 serves as a coordination point for ATP. Residue Arg490 coordinates L-aspartate. An ATP-binding site is contributed by 535–538 (GIDR).

It belongs to the class-II aminoacyl-tRNA synthetase family. Type 1 subfamily. Homodimer.

It localises to the cytoplasm. The enzyme catalyses tRNA(Asp) + L-aspartate + ATP = L-aspartyl-tRNA(Asp) + AMP + diphosphate. Functionally, catalyzes the attachment of L-aspartate to tRNA(Asp) in a two-step reaction: L-aspartate is first activated by ATP to form Asp-AMP and then transferred to the acceptor end of tRNA(Asp). The protein is Aspartate--tRNA ligase of Xylella fastidiosa (strain M12).